Here is a 211-residue protein sequence, read N- to C-terminus: Probable nicotinate-nucleotide adenylyltransferase (211 aa).

Belongs to the NadD family.

It catalyses the reaction nicotinate beta-D-ribonucleotide + ATP + H(+) = deamido-NAD(+) + diphosphate. It functions in the pathway cofactor biosynthesis; NAD(+) biosynthesis; deamido-NAD(+) from nicotinate D-ribonucleotide: step 1/1. Its function is as follows. Catalyzes the reversible adenylation of nicotinate mononucleotide (NaMN) to nicotinic acid adenine dinucleotide (NaAD). This chain is Probable nicotinate-nucleotide adenylyltransferase, found in Thermoanaerobacter sp. (strain X514).